The following is an 833-amino-acid chain: Scavenger receptor class F member 2 (833 aa).

Positions M1 to A33 are cleaved as a signal peptide. Residues A34–K433 lie on the Extracellular side of the membrane. EGF-like domains lie at L63 to D102, C114 to E145, W140 to A174, S175 to N204, N205 to D233, and F228 to R262. 18 disulfide bridges follow: C67/C78, C72/C90, C92/C101, C118/C126, C120/C133, C135/C144, C148/C155, C150/C162, C164/C173, C177/C185, C179/C192, C194/C203, C207/C214, C209/C221, C223/C232, C236/C243, C238/C250, and C252/C261. N75 is a glycosylation site (N-linked (GlcNAc...) asparagine). N-linked (GlcNAc...) asparagine glycosylation is found at N302 and N357. An EGF-like 7 domain is found at C364–N395. Intrachain disulfides connect C368–C376, C371–C383, and C385–C394. N395 is a glycosylation site (N-linked (GlcNAc...) asparagine). The chain crosses the membrane as a helical span at residues G434–G454. Over C455–S833 the chain is Cytoplasmic. Phosphoserine occurs at positions 538 and 600. A disordered region spans residues S578–S833. A Phosphotyrosine modification is found at Y615. Over residues A619–N630 the composition is skewed to basic and acidic residues. A phosphoserine mark is found at S638, S640, and S695. T712 carries the phosphothreonine modification. A compositionally biased stretch (basic and acidic residues) spans E748–K761. Positions A781–A798 are enriched in low complexity. Residues K804–S816 are compositionally biased toward basic residues.

Homophilic and heterophilic interaction via its extracellular domain. Interacts with SCARF1. The heterophilic interaction with SCARF1, which is stronger than the homophilic interaction with itself, is suppressed by the presence of SCARF1 ligand such as Ac-LDL.

The protein resides in the membrane. Its function is as follows. Probable adhesion protein, which mediates homophilic and heterophilic interactions. In contrast to SCARF1, it poorly mediates the binding and degradation of acetylated low density lipoprotein (Ac-LDL). In Mus musculus (Mouse), this protein is Scavenger receptor class F member 2 (Scarf2).